The sequence spans 362 residues: Phospho-N-acetylmuramoyl-pentapeptide-transferase (362 aa).

A run of 10 helical transmembrane segments spans residues 28-48 (GAVL…IAWL), 75-95 (TMGG…WADL), 100-120 (VWIV…DDYL), 134-154 (AKLV…WSLQ), 170-190 (VLLQ…VGAG), 201-221 (GLAI…SYLV), 241-261 (LAVF…FNAP), 265-285 (VFMG…ISVV), 290-310 (LVLG…IVQV), and 339-359 (TVVI…LATL).

It belongs to the glycosyltransferase 4 family. MraY subfamily. The cofactor is Mg(2+).

It is found in the cell inner membrane. It carries out the reaction UDP-N-acetyl-alpha-D-muramoyl-L-alanyl-gamma-D-glutamyl-meso-2,6-diaminopimeloyl-D-alanyl-D-alanine + di-trans,octa-cis-undecaprenyl phosphate = di-trans,octa-cis-undecaprenyl diphospho-N-acetyl-alpha-D-muramoyl-L-alanyl-D-glutamyl-meso-2,6-diaminopimeloyl-D-alanyl-D-alanine + UMP. It participates in cell wall biogenesis; peptidoglycan biosynthesis. In terms of biological role, catalyzes the initial step of the lipid cycle reactions in the biosynthesis of the cell wall peptidoglycan: transfers peptidoglycan precursor phospho-MurNAc-pentapeptide from UDP-MurNAc-pentapeptide onto the lipid carrier undecaprenyl phosphate, yielding undecaprenyl-pyrophosphoryl-MurNAc-pentapeptide, known as lipid I. This is Phospho-N-acetylmuramoyl-pentapeptide-transferase from Paramagnetospirillum magneticum (strain ATCC 700264 / AMB-1) (Magnetospirillum magneticum).